The sequence spans 132 residues: Large ribosomal subunit protein uL14 (132 aa).

Belongs to the universal ribosomal protein uL14 family. In terms of assembly, part of the 50S ribosomal subunit. Forms a cluster with proteins L3 and L24e, part of which may contact the 16S rRNA in 2 intersubunit bridges.

Its function is as follows. Binds to 23S rRNA. Forms part of two intersubunit bridges in the 70S ribosome. This chain is Large ribosomal subunit protein uL14, found in Methanosarcina mazei (strain ATCC BAA-159 / DSM 3647 / Goe1 / Go1 / JCM 11833 / OCM 88) (Methanosarcina frisia).